A 189-amino-acid polypeptide reads, in one-letter code: Homeobox protein HD-2 (189 aa).

The segment at residues 119 to 181 is a DNA-binding region (homeobox; TALE-type); sequence KPRTRANFPM…NARRRILPFM (63 aa).

Belongs to the TALE/KNOX homeobox family.

Its subcellular location is the nucleus. The sequence is that of Homeobox protein HD-2 (HD-2) from Encephalitozoon cuniculi (strain GB-M1) (Microsporidian parasite).